A 189-amino-acid chain; its full sequence is Potassium-transporting ATPase KdpC subunit (189 aa).

The helical transmembrane segment at 8–28 threads the bilayer; it reads LVMLILLTLITGIAYPLLTTG.

This sequence belongs to the KdpC family. In terms of assembly, the system is composed of three essential subunits: KdpA, KdpB and KdpC.

It is found in the cell inner membrane. In terms of biological role, part of the high-affinity ATP-driven potassium transport (or Kdp) system, which catalyzes the hydrolysis of ATP coupled with the electrogenic transport of potassium into the cytoplasm. This subunit acts as a catalytic chaperone that increases the ATP-binding affinity of the ATP-hydrolyzing subunit KdpB by the formation of a transient KdpB/KdpC/ATP ternary complex. In Serratia proteamaculans (strain 568), this protein is Potassium-transporting ATPase KdpC subunit.